The primary structure comprises 89 residues: Small ribosomal subunit protein uS15 (89 aa).

It belongs to the universal ribosomal protein uS15 family. In terms of assembly, part of the 30S ribosomal subunit. Forms a bridge to the 50S subunit in the 70S ribosome, contacting the 23S rRNA.

Functionally, one of the primary rRNA binding proteins, it binds directly to 16S rRNA where it helps nucleate assembly of the platform of the 30S subunit by binding and bridging several RNA helices of the 16S rRNA. Its function is as follows. Forms an intersubunit bridge (bridge B4) with the 23S rRNA of the 50S subunit in the ribosome. In Listeria innocua serovar 6a (strain ATCC BAA-680 / CLIP 11262), this protein is Small ribosomal subunit protein uS15.